Here is a 184-residue protein sequence, read N- to C-terminus: UPF0316 protein YebE (184 aa).

3 helical membrane-spanning segments follow: residues 9–29, 41–61, and 67–87; these read GIAM…FFTI, LAAG…SLVL, and IQNV…GMKI.

This sequence belongs to the UPF0316 family.

It localises to the cell membrane. The sequence is that of UPF0316 protein YebE (yebE) from Bacillus subtilis (strain 168).